The chain runs to 255 residues: Sulfate transporter CysZ (255 aa).

Transmembrane regions (helical) follow at residues 26-46 (LFVL…IYFA), 71-91 (LLWP…FTML), 150-170 (LFIL…WLLF), and 211-231 (IVYL…AAVA).

Belongs to the CysZ family.

It is found in the cell inner membrane. Its function is as follows. High affinity, high specificity proton-dependent sulfate transporter, which mediates sulfate uptake. Provides the sulfur source for the cysteine synthesis pathway. This chain is Sulfate transporter CysZ, found in Pseudomonas fluorescens (strain SBW25).